Here is a 102-residue protein sequence, read N- to C-terminus: MKKFIALLFFILLLSGCGVNSQKSQGEDVSPDSNIETKEGTYVGLADTHTIEVTVDNEPVSLDITEESTSDLDKFNSGDKVTITYEKNDEGQLLLKDIERAN.

The N-terminal stretch at 1 to 16 is a signal peptide; sequence MKKFIALLFFILLLSG. Residue Cys-17 is the site of N-palmitoyl cysteine attachment. The S-diacylglycerol cysteine moiety is linked to residue Cys-17.

It localises to the cell membrane. In terms of biological role, possible role in the secretion of LytB and LytC. This is Membrane-bound protein LytA (lytA) from Bacillus subtilis (strain 168).